The primary structure comprises 1018 residues: UPF0182 protein Tfu_0541 (1018 aa).

The next 7 membrane-spanning stretches (helical) occupy residues 20 to 40, 64 to 84, 115 to 135, 171 to 191, 212 to 232, 254 to 274, and 287 to 307; these read LAPVGAAVVVIIAGIMFAANF, ALLFAGGALLMALAVGLSVYF, VFFWGLVGGLALLTGASATAE, VIIGYLYTAVVIAFIAGVVVH, VHLSVLLGVFLLLRAADYWLE, AVLYAKIILFFIALVCAVLFF, and VSLGLMVLSAILIGGVYPAIV. 2 disordered regions span residues 497–570 and 939–965; these read YPVD…QANN and GDEAPLEEPTTDGEAREEEEQPQASSD. Composition is skewed to acidic residues over residues 542–560 and 939–959; these read QDQEGQDGGEDAQGTEEEQ and GDEAPLEEPTTDGEAREEEEQ.

It belongs to the UPF0182 family.

It localises to the cell membrane. The chain is UPF0182 protein Tfu_0541 from Thermobifida fusca (strain YX).